We begin with the raw amino-acid sequence, 350 residues long: Olfactory receptor 52I2 (350 aa).

Over 1–55 (MCQQILRDCILLIHHLCINRKKVSLVMLGPAYNHTMETPASFLLVGIPGLQSSHL) the chain is Extracellular. The N-linked (GlcNAc...) asparagine glycan is linked to asparagine 33. The helical transmembrane segment at 56–76 (WLAISLSAMYIIALLGNTIIV) threads the bilayer. Residues 77 to 84 (TAIWMDST) lie on the Cytoplasmic side of the membrane. A helical transmembrane segment spans residues 85–105 (RHEPMYCFLCVLAAVDIVMAS). The Extracellular portion of the chain corresponds to 106–129 (SVVPKMVSIFCSGDSSISFSACFT). Residues cysteine 127 and cysteine 219 are joined by a disulfide bond. Residues 130–150 (QMFFVHLATAVETGLLLTMAF) form a helical membrane-spanning segment. The Cytoplasmic segment spans residues 151 to 169 (DRYVAICKPLHYKRILTPQ). Residues 170-190 (VMLGMSMAITIRAIIAITPLS) traverse the membrane as a helical segment. Over 191 to 226 (WMVSHLPFCGSNVVVHSYCEHIALARLACADPVPSS) the chain is Extracellular. A helical membrane pass occupies residues 227-247 (LYSLIGSSLMVGSDVAFIAAS). The Cytoplasmic segment spans residues 248–267 (YILILKAVFGLSSKTAQLKA). Residues 268 to 288 (LSTCGSHVGVMALYYLPGMAS) form a helical membrane-spanning segment. Over 289–304 (IYAAWLGQDVVPLHTQ) the chain is Extracellular. Residues 305 to 325 (VLLADLYVIIPATLNPIIYGM) traverse the membrane as a helical segment. The Cytoplasmic portion of the chain corresponds to 326–350 (RTKQLRERIWSYLMHVLFDHSNLGS).

This sequence belongs to the G-protein coupled receptor 1 family.

Its subcellular location is the cell membrane. Odorant receptor. The polypeptide is Olfactory receptor 52I2 (OR52I2) (Homo sapiens (Human)).